We begin with the raw amino-acid sequence, 335 residues long: Capsular polysaccharide phosphotransferase WcwK (335 aa).

This sequence belongs to the stealth family.

The sequence is that of Capsular polysaccharide phosphotransferase WcwK (wcwK) from Streptococcus pneumoniae.